The following is a 124-amino-acid chain: Probable 5-hydroxyisourate hydrolase (124 aa).

Histidine 16, arginine 57, and tyrosine 121 together coordinate substrate.

This sequence belongs to the transthyretin family. 5-hydroxyisourate hydrolase subfamily. As to quaternary structure, homotetramer.

The enzyme catalyses 5-hydroxyisourate + H2O = 5-hydroxy-2-oxo-4-ureido-2,5-dihydro-1H-imidazole-5-carboxylate + H(+). In terms of biological role, catalyzes the hydrolysis of 5-hydroxyisourate (HIU) to 2-oxo-4-hydroxy-4-carboxy-5-ureidoimidazoline (OHCU). The sequence is that of Probable 5-hydroxyisourate hydrolase from Schizosaccharomyces pombe (strain 972 / ATCC 24843) (Fission yeast).